The sequence spans 73 residues: UPF0346 protein BLi02292/BL01432 (73 aa).

It belongs to the UPF0346 family.

The protein is UPF0346 protein BLi02292/BL01432 of Bacillus licheniformis (strain ATCC 14580 / DSM 13 / JCM 2505 / CCUG 7422 / NBRC 12200 / NCIMB 9375 / NCTC 10341 / NRRL NRS-1264 / Gibson 46).